Consider the following 330-residue polypeptide: Beta-ketoacyl-[acyl-carrier-protein] synthase III (330 aa).

Active-site residues include cysteine 114 and histidine 255. The tract at residues 256–260 is ACP-binding; the sequence is QANQR. Asparagine 285 is a catalytic residue.

The protein belongs to the thiolase-like superfamily. FabH family. Homodimer.

The protein resides in the cytoplasm. The catalysed reaction is malonyl-[ACP] + acetyl-CoA + H(+) = 3-oxobutanoyl-[ACP] + CO2 + CoA. Its pathway is lipid metabolism; fatty acid biosynthesis. Catalyzes the condensation reaction of fatty acid synthesis by the addition to an acyl acceptor of two carbons from malonyl-ACP. Catalyzes the first condensation reaction which initiates fatty acid synthesis and may therefore play a role in governing the total rate of fatty acid production. Possesses both acetoacetyl-ACP synthase and acetyl transacylase activities. Its substrate specificity determines the biosynthesis of branched-chain and/or straight-chain of fatty acids. In Nostoc sp. (strain PCC 7120 / SAG 25.82 / UTEX 2576), this protein is Beta-ketoacyl-[acyl-carrier-protein] synthase III.